The sequence spans 238 residues: Tyrosine recombinase XerD-like (238 aa).

One can recognise a Core-binding (CB) domain in the interval 1–75; the sequence is MKLPNEIEEY…SANQYFLFLY (75 aa). The Tyr recombinase domain maps to 90–238; the sequence is VQKKTQSSES…TITALEKYYR (149 aa). Residues Lys154 and Arg204 contribute to the active site. Tyr236 serves as the catalytic O-(3'-phospho-DNA)-tyrosine intermediate.

This sequence belongs to the 'phage' integrase family. XerD-like subfamily.

The protein resides in the cytoplasm. Its function is as follows. Putative tyrosine recombinase. Not involved in the cutting and rejoining of the recombining DNA molecules on dif(SL) site. The sequence is that of Tyrosine recombinase XerD-like from Lactococcus lactis subsp. cremoris (strain SK11).